A 637-amino-acid chain; its full sequence is MLNITLPDGSVRQYESPVTVAQIAASIGAGLAKATVAGRVNGKLVDACDPIVEDSAVQIITPKDQEGIEIIRHSCAHLVGHAVKQLYPNAKMVIGPVIEEGFYYDIATEKPFTPEDVAAIEARMKELIAQDYDVVKIMTPRAEAIKIFQERGEEYKLRLIDDMPEVEAMGMYHHQEYVDMCRGPHVPNTRFLKNFKLTKLAGAYWRGDSNNEMLQRIYGTAWATKDELKAYIQRIEEAEKRDHRKLGKQLDLFHLQDEAPGMVFWHPKGWALWQVIEQHMRKELNAAGYKEVKTPQIMDKTFWEKSGHWDNYKDNMFVTSSEKREYAVKPMNCPGHVQIFNNGLRSYRDLPMRLAEFGSCHRNEPSGALHGLMRVRGFVQDDAHIFCTEDQIVSEARAFNELLIRIYKQFGFHDVSVKLSLRPEKRAGSDDVWDKAEQGLREALTACGVEWGELPGEGAFYGPKIEYHVRDALGRSWQCGTLQLDFVLPERLNAEYVTENNDRARPVMLHRAILGSLERFIGILIENHAGSFPLWLAPVQLVIMNITENQADYCREVAAKLQAAGFRAELDLRNEKIGYKIRDNSQYRFPYQIVVGDKEKQENKVAVRRKAEDLGSLDLDDFIAQLQQEITDALVNH.

A TGS domain is found at 1–61; sequence MLNITLPDGS…VEDSAVQIIT (61 aa). The interval 242-533 is catalytic; the sequence is DHRKLGKQLD…LIENHAGSFP (292 aa). The Zn(2+) site is built by Cys333, His384, and His510.

It belongs to the class-II aminoacyl-tRNA synthetase family. As to quaternary structure, homodimer. Zn(2+) is required as a cofactor.

It localises to the cytoplasm. The enzyme catalyses tRNA(Thr) + L-threonine + ATP = L-threonyl-tRNA(Thr) + AMP + diphosphate + H(+). Its function is as follows. Catalyzes the attachment of threonine to tRNA(Thr) in a two-step reaction: L-threonine is first activated by ATP to form Thr-AMP and then transferred to the acceptor end of tRNA(Thr). Also edits incorrectly charged L-seryl-tRNA(Thr). This is Threonine--tRNA ligase from Neisseria meningitidis serogroup B (strain ATCC BAA-335 / MC58).